The primary structure comprises 185 residues: Elongation factor P (185 aa).

The protein belongs to the elongation factor P family.

The protein localises to the cytoplasm. The protein operates within protein biosynthesis; polypeptide chain elongation. Functionally, involved in peptide bond synthesis. Stimulates efficient translation and peptide-bond synthesis on native or reconstituted 70S ribosomes in vitro. Probably functions indirectly by altering the affinity of the ribosome for aminoacyl-tRNA, thus increasing their reactivity as acceptors for peptidyl transferase. This chain is Elongation factor P, found in Synechococcus sp. (strain JA-2-3B'a(2-13)) (Cyanobacteria bacterium Yellowstone B-Prime).